The following is a 125-amino-acid chain: Ribonuclease P protein component (125 aa).

Belongs to the RnpA family. Consists of a catalytic RNA component (M1 or rnpB) and a protein subunit.

It catalyses the reaction Endonucleolytic cleavage of RNA, removing 5'-extranucleotides from tRNA precursor.. In terms of biological role, RNaseP catalyzes the removal of the 5'-leader sequence from pre-tRNA to produce the mature 5'-terminus. It can also cleave other RNA substrates such as 4.5S RNA. The protein component plays an auxiliary but essential role in vivo by binding to the 5'-leader sequence and broadening the substrate specificity of the ribozyme. This chain is Ribonuclease P protein component, found in Rhodococcus opacus (strain B4).